A 120-amino-acid polypeptide reads, in one-letter code: Large ribosomal subunit protein bL19 (120 aa).

The protein belongs to the bacterial ribosomal protein bL19 family.

This protein is located at the 30S-50S ribosomal subunit interface and may play a role in the structure and function of the aminoacyl-tRNA binding site. The chain is Large ribosomal subunit protein bL19 from Microcystis aeruginosa (strain NIES-843 / IAM M-2473).